A 512-amino-acid chain; its full sequence is Chlorogenic acid esterase (512 aa).

The signal sequence occupies residues 1-18; that stretch reads MLLRLCIIATLLVSHCVA. Asn47, Asn80, and Asn98 each carry an N-linked (GlcNAc...) asparagine glycan. Cys92 and Cys120 are oxidised to a cystine. The Acyl-ester intermediate role is filled by Ser230. N-linked (GlcNAc...) asparagine glycosylation occurs at Asn271. Cys281 and Cys292 form a disulfide bridge. Residues Asn295, Asn322, and Asn328 are each glycosylated (N-linked (GlcNAc...) asparagine). The Charge relay system role is filled by Glu351. N-linked (GlcNAc...) asparagine glycans are attached at residues Asn391 and Asn402. His416 functions as the Charge relay system in the catalytic mechanism. Asn474 carries N-linked (GlcNAc...) asparagine glycosylation.

It belongs to the type-B carboxylesterase/lipase family.

The protein localises to the secreted. The catalysed reaction is chlorogenate + H2O = L-quinate + (E)-caffeate + H(+). Extracellular chlorogenic acid esterase that releases caffeic acid from chlorogenic acid (CGA) contained in natural substrates such as apple marc and coffee pulp. Shows no activity towards 5-O-p-coumaroyl quinic acid, another quinic ester derivative, and rosmarinic acid, another caffeic ester derivative. The sequence is that of Chlorogenic acid esterase from Aspergillus niger.